The chain runs to 407 residues: tRNA pseudouridine synthase Pus10 (407 aa).

The active-site Nucleophile is aspartate 232. 2 residues coordinate substrate: tyrosine 300 and tyrosine 369.

The protein belongs to the pseudouridine synthase Pus10 family.

The catalysed reaction is uridine(54) in tRNA = pseudouridine(54) in tRNA. The enzyme catalyses uridine(55) in tRNA = pseudouridine(55) in tRNA. Functionally, responsible for synthesis of pseudouridine from uracil-54 and uracil-55 in the psi GC loop of transfer RNAs. In Methanosphaera stadtmanae (strain ATCC 43021 / DSM 3091 / JCM 11832 / MCB-3), this protein is tRNA pseudouridine synthase Pus10.